The following is a 62-amino-acid chain: MGKGTPSMGKHGRSKTHIVCRRCGRRSYNVAKGYCAACGFGRSRRMRRYSWQNKKWNRVRVV.

4 residues coordinate Zn(2+): Cys-20, Cys-23, Cys-35, and Cys-38. A C4-type zinc finger spans residues 20 to 38 (CRRCGRRSYNVAKGYCAAC).

Belongs to the eukaryotic ribosomal protein eL37 family. Requires Zn(2+) as cofactor.

Functionally, binds to the 23S rRNA. This Aeropyrum pernix (strain ATCC 700893 / DSM 11879 / JCM 9820 / NBRC 100138 / K1) protein is Large ribosomal subunit protein eL37 (rpl37e).